Reading from the N-terminus, the 360-residue chain is D-alanine--D-alanine ligase (360 aa).

The ATP-grasp domain occupies 146 to 352 (KLCVADAGIA…FPELAERLLQ (207 aa)). 179 to 234 (EEKFIYPFFVKPANLGSSIGISKVHHREQLPAALKSACSLDSKIVVEKAITGREIE) is a binding site for ATP. Residues aspartate 305, glutamate 319, and asparagine 321 each contribute to the Mg(2+) site.

The protein belongs to the D-alanine--D-alanine ligase family. The cofactor is Mg(2+). Mn(2+) is required as a cofactor.

The protein resides in the cytoplasm. The catalysed reaction is 2 D-alanine + ATP = D-alanyl-D-alanine + ADP + phosphate + H(+). It participates in cell wall biogenesis; peptidoglycan biosynthesis. Its function is as follows. Cell wall formation. The protein is D-alanine--D-alanine ligase of Pelodictyon phaeoclathratiforme (strain DSM 5477 / BU-1).